We begin with the raw amino-acid sequence, 358 residues long: MDPLRRSPSPCLSSQPSSPSTPPCEMLGPVGIEAVLDQLKIKAMKMGFEFNIMVVGQSGLGKSTMVNTLFKSKVWKSNPPGLGVPTPQTLQLHSLTHVIEEKGVKLKLTVTDTPGFGDQINNDNCWDPILGYINEQYEQYLQEEILITRQRHIPDTRVHCCVYFVPPTGHCLRPLDIEFLQRLCRTVNVVPVIARADSLTMEEREAFRRRIQQNLRTHCIDVYPQMCFDEDINDKILNSKLRDRIPFAVVGADQEHLVNGRCVLGRKTKWGIIEVENMAHCEFPLLRDLLIRSHLQDLKDITHNIHYENYRVIRLNESHLLPRGPGWVNLAPASPGQLTTPRTFKVCRGAHDDSDDEF.

The interval 1–25 is disordered; that stretch reads MDPLRRSPSPCLSSQPSSPSTPPCE. Residues 6–18 are compositionally biased toward low complexity; sequence RSPSPCLSSQPSS. Positions 46 to 317 constitute a Septin-type G domain; it reads MGFEFNIMVV…ENYRVIRLNE (272 aa). Positions 46–319 are interaction with SEPTIN7; that stretch reads MGFEFNIMVV…YRVIRLNESH (274 aa). The interval 56–63 is G1 motif; sequence GQSGLGKS. Residues 56-63, T89, G115, 195-203, G251, and R266 contribute to the GTP site; these read GQSGLGKS and RADSLTMEE. Positions 112–115 are G3 motif; the sequence is DTPG. Residues 194–197 are G4 motif; it reads ARAD. The self-association (via N-terminus) to polymerize octameric septin 12-7-6-2/4-2/4-6-7-12 filaments stretch occupies residues 258 to 358; sequence VNGRCVLGRK…GAHDDSDDEF (101 aa).

This sequence belongs to the TRAFAC class TrmE-Era-EngA-EngB-Septin-like GTPase superfamily. Septin GTPase family. Septins polymerize into heterooligomeric protein complexes that form filaments, and can associate with cellular membranes, actin filaments and microtubules. GTPase activity is required for filament formation. Interacts with SEPTIN6 and SEPTIN11. Self-associates. Component of a septin core octameric complex consisting of SEPTIN12, SEPTIN7, SEPTIN6 and SEPTIN2 or SEPTIN4 in the order 12-7-6-2-2-6-7-12 or 12-7-6-4-4-6-7-12 and located in the sperm annulus; the octamer polymerizes into filaments via the SEPTIN12 N- and C-termini; the SEPTIN12:SEPTIN7 association is mediated by the respective GTP-binding domains. Interacts with SPAG4 and LMNB1. Associates with alpha- and beta-tubulins. As to expression, widely expressed. Expressed in lymph node.

The protein localises to the cytoplasm. The protein resides in the cytoskeleton. It localises to the spindle. It is found in the nucleus. Its subcellular location is the cell projection. The protein localises to the cilium. The protein resides in the flagellum. In terms of biological role, filament-forming cytoskeletal GTPase. Involved in spermatogenesis. Involved in the morphogenesis of sperm heads and the elongation of sperm tails probably implicating the association with alpha- and beta-tubulins. Forms a filamentous structure with SEPTIN7, SEPTIN6, SEPTIN2 and probably SEPTIN4 at the sperm annulus which is required for the structural integrity and motility of the sperm tail during postmeiotic differentiation. May play a role in cytokinesis (Potential). The chain is Septin-12 from Homo sapiens (Human).